The primary structure comprises 251 residues: Chlorocatechol 1,2-dioxygenase (251 aa).

Tyr-130, Tyr-164, His-188, and His-190 together coordinate Fe cation.

This sequence belongs to the intradiol ring-cleavage dioxygenase family. Requires Fe(3+) as cofactor.

The catalysed reaction is 3-chlorocatechol + O2 = (2E,4Z)-2-chloromuconate + 2 H(+). The enzyme catalyses 3,4-dichlorocatechol + O2 = (2Z,4Z)-2,3-dichloromuconate + 2 H(+). It carries out the reaction 3,5-dichlorocatechol + O2 = (2E,4E)-2,4-dichloromuconate + 2 H(+). It catalyses the reaction 3,6-dichlorocatechol + O2 = (2E,4E)-2,5-dichloromuconate + H(+). The catalysed reaction is 3,4,6-trichlorocatechol + O2 = (2Z,4E)-2,3,5-trichloromuconate + H(+). It functions in the pathway xenobiotic degradation. Chlorocatechol 1,2-dioxygenase involved in the degradation of chlorinated benzenes, that occurs via chlorocatechol intermediates. Displays broad substrate specificity. Preferentially cleaves 3-chlorocatechol and 3,4-dichlorocatechol, and shows lower activity on 3,5-dichlorocatechol, 3,6-dichlorocatechol and 3,4,6-trichlorocatechol in vitro. Is not able to convert 3,4,5-trichlorocatechol and 3,4,5,6-tetrachlorocatechol. Thus, probably functions in the degradation pathways of 1,2-dichlorobenzene, 1,4-dichlorobenzene and 1,2,4-trichlorobenzene (via 3,4-dichlorocatechol, 3,6-dichlorocatechol and 3,4,6-trichlorocatechol intermediates, respectively), which allow Pseudomonas sp. strain P51 to grow on these substrates as the sole carbon and energy source. The chain is Chlorocatechol 1,2-dioxygenase from Pseudomonas sp. (strain P51).